The sequence spans 309 residues: MVDMKIWTGRVDAAEGEAAKRWHQAVQAMPENGAPGIAIIGFACDEGVRRNQGRVGAAGGPKTLRKALANLAYHPTLPLYDAGDVACADGDLAAAQQRLGERVAQVIAAGHLPLVLGGGHETAYGHWLGLSAAHPDKRIGVINFDAHFDLRQASEATSGTPFAQIAADCARHGRVFRYLCLGVAETANTQALFDTARRLGAEWRLDTDMNGWQLADIRGQLAEFLDSVDAVYLTIDLDVLPAAQMPAVSAPAGYGVDIAVVEALAGRIAKSGKLAGADLVEFNPDYDIDSHGAKAAARLAWSLSRHLRR.

6 residues coordinate Mn(2+): H120, D145, H147, D149, D236, and D238.

It belongs to the arginase family. Requires Mn(2+) as cofactor.

The catalysed reaction is N-formimidoyl-L-glutamate + H2O = formamide + L-glutamate. The protein operates within amino-acid degradation; L-histidine degradation into L-glutamate; L-glutamate from N-formimidoyl-L-glutamate (hydrolase route): step 1/1. Catalyzes the conversion of N-formimidoyl-L-glutamate to L-glutamate and formamide. This chain is Formimidoylglutamase, found in Chromobacterium violaceum (strain ATCC 12472 / DSM 30191 / JCM 1249 / CCUG 213 / NBRC 12614 / NCIMB 9131 / NCTC 9757 / MK).